Reading from the N-terminus, the 133-residue chain is uncharacterized protein (133 aa).

The Response regulatory domain occupies 9-128 (RILVYSDNVQ…VLGRTVLSLL (120 aa)). 4-aspartylphosphate is present on aspartate 64.

This is an uncharacterized protein from Mycobacterium tuberculosis (strain CDC 1551 / Oshkosh).